Consider the following 292-residue polypeptide: Putative ribonuclease 3 (292 aa).

The 127-residue stretch at 32 to 158 (LGMSDEYIPY…FFGATEWLID (127 aa)) folds into the RNase III domain. In terms of domain architecture, DRBM spans 204-276 (DAKTRFNEVI…ASRALETLAL (73 aa)).

This sequence belongs to the IIV-6 142R family.

The catalysed reaction is Endonucleolytic cleavage to 5'-phosphomonoester.. Digests double-stranded RNA. This chain is Putative ribonuclease 3, found in Acheta domesticus (House cricket).